The sequence spans 212 residues: Thymidine kinase (212 aa).

ATP is bound by residues 16 to 23 and 99 to 102; these read GPMFSGKS and DEAQ. E100 functions as the Proton acceptor in the catalytic mechanism.

Belongs to the thymidine kinase family. In terms of assembly, homotetramer.

It is found in the cytoplasm. The enzyme catalyses thymidine + ATP = dTMP + ADP + H(+). The chain is Thymidine kinase from Deinococcus radiodurans (strain ATCC 13939 / DSM 20539 / JCM 16871 / CCUG 27074 / LMG 4051 / NBRC 15346 / NCIMB 9279 / VKM B-1422 / R1).